The primary structure comprises 948 residues: Valine--tRNA ligase (948 aa).

The 'HIGH' region motif lies at 40-50 (PNVTGSLHMGH). A 'KMSKS' region motif is present at residues 551–555 (KMSKS). Lys554 is an ATP binding site. Positions 879-945 (LIDKGAELAR…GKLAEQHARI (67 aa)) form a coiled coil.

It belongs to the class-I aminoacyl-tRNA synthetase family. ValS type 1 subfamily. In terms of assembly, monomer.

Its subcellular location is the cytoplasm. The catalysed reaction is tRNA(Val) + L-valine + ATP = L-valyl-tRNA(Val) + AMP + diphosphate. Catalyzes the attachment of valine to tRNA(Val). As ValRS can inadvertently accommodate and process structurally similar amino acids such as threonine, to avoid such errors, it has a 'posttransfer' editing activity that hydrolyzes mischarged Thr-tRNA(Val) in a tRNA-dependent manner. In Pseudomonas syringae pv. syringae (strain B728a), this protein is Valine--tRNA ligase.